A 406-amino-acid polypeptide reads, in one-letter code: Putative competence-damage inducible protein (406 aa).

The protein belongs to the CinA family.

The polypeptide is Putative competence-damage inducible protein (Natranaerobius thermophilus (strain ATCC BAA-1301 / DSM 18059 / JW/NM-WN-LF)).